Here is a 251-residue protein sequence, read N- to C-terminus: Ubiquinone/menaquinone biosynthesis C-methyltransferase UbiE (251 aa).

S-adenosyl-L-methionine is bound by residues threonine 74, aspartate 95, asparagine 123–alanine 124, and serine 140.

Belongs to the class I-like SAM-binding methyltransferase superfamily. MenG/UbiE family.

It carries out the reaction a 2-demethylmenaquinol + S-adenosyl-L-methionine = a menaquinol + S-adenosyl-L-homocysteine + H(+). The enzyme catalyses a 2-methoxy-6-(all-trans-polyprenyl)benzene-1,4-diol + S-adenosyl-L-methionine = a 5-methoxy-2-methyl-3-(all-trans-polyprenyl)benzene-1,4-diol + S-adenosyl-L-homocysteine + H(+). It functions in the pathway quinol/quinone metabolism; menaquinone biosynthesis; menaquinol from 1,4-dihydroxy-2-naphthoate: step 2/2. Its pathway is cofactor biosynthesis; ubiquinone biosynthesis. In terms of biological role, methyltransferase required for the conversion of demethylmenaquinol (DMKH2) to menaquinol (MKH2) and the conversion of 2-polyprenyl-6-methoxy-1,4-benzoquinol (DDMQH2) to 2-polyprenyl-3-methyl-6-methoxy-1,4-benzoquinol (DMQH2). In Photorhabdus laumondii subsp. laumondii (strain DSM 15139 / CIP 105565 / TT01) (Photorhabdus luminescens subsp. laumondii), this protein is Ubiquinone/menaquinone biosynthesis C-methyltransferase UbiE.